The chain runs to 643 residues: Phosphomethylpyrimidine synthase (643 aa).

Substrate-binding positions include asparagine 248, methionine 277, tyrosine 306, histidine 342, 362–364 (SRG), 403–406 (DGLR), and glutamate 442. Position 446 (histidine 446) interacts with Zn(2+). Substrate is bound at residue tyrosine 469. Histidine 510 is a Zn(2+) binding site. 3 residues coordinate [4Fe-4S] cluster: cysteine 590, cysteine 593, and cysteine 598.

This sequence belongs to the ThiC family. As to quaternary structure, homodimer. [4Fe-4S] cluster serves as cofactor.

It carries out the reaction 5-amino-1-(5-phospho-beta-D-ribosyl)imidazole + S-adenosyl-L-methionine = 4-amino-2-methyl-5-(phosphooxymethyl)pyrimidine + CO + 5'-deoxyadenosine + formate + L-methionine + 3 H(+). Its pathway is cofactor biosynthesis; thiamine diphosphate biosynthesis. Its function is as follows. Catalyzes the synthesis of the hydroxymethylpyrimidine phosphate (HMP-P) moiety of thiamine from aminoimidazole ribotide (AIR) in a radical S-adenosyl-L-methionine (SAM)-dependent reaction. The chain is Phosphomethylpyrimidine synthase from Paraburkholderia xenovorans (strain LB400).